The sequence spans 168 residues: Endoribonuclease YbeY (168 aa).

3 residues coordinate Zn(2+): His-126, His-130, and His-136.

The protein belongs to the endoribonuclease YbeY family. Zn(2+) serves as cofactor.

It localises to the cytoplasm. Single strand-specific metallo-endoribonuclease involved in late-stage 70S ribosome quality control and in maturation of the 3' terminus of the 16S rRNA. The polypeptide is Endoribonuclease YbeY (Agrobacterium fabrum (strain C58 / ATCC 33970) (Agrobacterium tumefaciens (strain C58))).